Here is a 521-residue protein sequence, read N- to C-terminus: Vang-like protein 2-A (521 aa).

Residues 1 to 81 (MDNDSQYSGY…TTVVTGTSEH (81 aa)) form a disordered region. The Cytoplasmic segment spans residues 1-108 (MDNDSQYSGY…AKLDCSRHLG (108 aa)). Over residues 15–33 (GHSRSSRKHRDRRERHRSK) the composition is skewed to basic residues. The segment covering 57–67 (ESTRGEDRDDN) has biased composition (basic and acidic residues). Residues 69 to 81 (GETTTVVTGTSEH) show a composition bias toward low complexity. The chain crosses the membrane as a helical span at residues 109–129 (VVIGGALALLSFLTPIAFMLL). At 130 to 147 (PQILWREDLEQCGTACEG) the chain is on the extracellular side. A helical membrane pass occupies residues 148 to 168 (LFISVAFKLLILLLGSWALFF). Topologically, residues 169-178 (RRPKAFFPRV) are cytoplasmic. A helical membrane pass occupies residues 179 to 199 (FVFRALLMVLVFLLVVSYWLF). Over 200-218 (YGVRILESRDKNYQGIVQY) the chain is Extracellular. A helical transmembrane segment spans residues 219–239 (AVSLVDALLFVHYLAVVLLEL). At 240–521 (RQLQPQFTIK…VMRLQSETSV (282 aa)) the chain is on the cytoplasmic side. Residues 518–521 (ETSV) carry the PDZ-binding motif.

Belongs to the Vang family. Interacts with dvl/dsh. Interacts with prickle3. As to expression, during gastrulation, broadly expressed throughout the marginal zone and animal cap region. From the neurula stages, expression becomes concentrated in neural tissues, in the neural plate and neural tube.

It is found in the cell membrane. In terms of biological role, has a role in non-canonical Wnt/planar cell polarity (PCP) signaling; can recruit dvl/dsh and prickle from the cytoplasm to the plasma membrane. Acts in a PCP complex to regulate the polarized assembly of fibronectrin on the surface of the mesoderm during gastrulation. Regulates convergent extension cell movements in both dorsal mesoderm and neural tissue during gastrulation, without affecting cell fate. Regulates neural fold closure during neurulation. May be required for cell surface localization of fzd3 and fzd6 in the inner ear. The protein is Vang-like protein 2-A (vangl2-a) of Xenopus laevis (African clawed frog).